A 1169-amino-acid chain; its full sequence is Transcription-repair-coupling factor (1169 aa).

The region spanning 634–795 (DMERERPMDR…MLGVRDLSVI (162 aa)) is the Helicase ATP-binding domain. ATP is bound at residue 647-654 (GDVGYGKT). The short motif at 748–751 (DEEQ) is the DEEQ box element. Residues 809–970 (VLEQNSNFIK…GFKIAMRDLN (162 aa)) form the Helicase C-terminal domain.

The protein in the N-terminal section; belongs to the UvrB family. It in the C-terminal section; belongs to the helicase family. RecG subfamily.

The protein localises to the cytoplasm. In terms of biological role, couples transcription and DNA repair by recognizing RNA polymerase (RNAP) stalled at DNA lesions. Mediates ATP-dependent release of RNAP and its truncated transcript from the DNA, and recruitment of nucleotide excision repair machinery to the damaged site. The sequence is that of Transcription-repair-coupling factor from Staphylococcus haemolyticus (strain JCSC1435).